Consider the following 168-residue polypeptide: Secretory-abundant heat soluble protein 33020 (168 aa).

Residues 1 to 19 form the signal peptide; the sequence is MARFLVALALFGVVAMTAA. An SAHS-c1 region spans residues 26-57; the sequence is EWSGKPWLGKFVAEVSDKSENWEAFVDALGLP. Residues 72-100 form an SAHS-c2 region; that stretch reads YKQGEHYHHILSLPDKNINKDIEFTLGQE. Residues 113 to 162 form an SAHS-c3 region; the sequence is KYFEDGNKLVADVSIPAKGKSIHDVYDVQGDQLIKSYKVGDVVAKKWFKK.

Belongs to the Secretory-abundant heat soluble protein (SAHS) family.

The protein localises to the secreted. Secreted heat soluble protein acting as a molecular shield in water-deficient condition. Tardigrade-specific intrinsically disordered proteins (TDPs) are essential for desiccation tolerance by forming non-crystalline amorphous solids upon desiccation, and this vitrified state mirrors their protective capabilities. The sequence is that of Secretory-abundant heat soluble protein 33020 from Hypsibius exemplaris (Freshwater tardigrade).